Consider the following 252-residue polypeptide: Neurexophilin-3 (252 aa).

The N-terminal stretch at methionine 1–glycine 22 is a signal peptide. An II region spans residues glutamine 23–alanine 75. The disordered stretch occupies residues proline 27–arginine 58. Over residues arginine 45 to proline 55 the composition is skewed to basic residues. Asparagine 62, asparagine 127, asparagine 137, and asparagine 143 each carry an N-linked (GlcNAc...) asparagine glycan. Residues tryptophan 76 to phenylalanine 157 form an III region. An IV (linker domain) region spans residues histidine 158–glutamate 166. A v (Cys-rich) region spans residues alanine 167–glycine 252.

It belongs to the neurexophilin family. In terms of processing, may be proteolytically processed at the boundary between the N-terminal non-conserved and the central conserved domain in neuron-like cells. Highest level in brain.

The protein resides in the secreted. May be signaling molecules that resemble neuropeptides. Ligand for alpha-neurexins. The protein is Neurexophilin-3 (NXPH3) of Homo sapiens (Human).